The chain runs to 275 residues: MANIKAKKYYSYAKINLFLHILNKRPDGYHNLQTWFTFLDLKDQLTFSFNNSREINISSNISIAAKQDNLVYKAIKKFQQSYRVQDIGVDIEIKKNIPMGAGLGGGSSNAATTLIALRDYYLPQLSNEEMIPLAAKLGADVPIFVYGKSAWAEGIGEILYHKDFSPQYALLIKPDIHISTKEFFTSEDLIKSSVLISKDLGFDKSIMHNDFENVFYAKYPEFSQYLKELDSDFRMTGTGSCFYLLSADKNKLEQLARKINKPLDKWLVKTLNYVY.

Lys14 is an active-site residue. 98–108 (PMGAGLGGGSS) lines the ATP pocket. Asp140 is a catalytic residue.

The protein belongs to the GHMP kinase family. IspE subfamily.

It carries out the reaction 4-CDP-2-C-methyl-D-erythritol + ATP = 4-CDP-2-C-methyl-D-erythritol 2-phosphate + ADP + H(+). It participates in isoprenoid biosynthesis; isopentenyl diphosphate biosynthesis via DXP pathway; isopentenyl diphosphate from 1-deoxy-D-xylulose 5-phosphate: step 3/6. Functionally, catalyzes the phosphorylation of the position 2 hydroxy group of 4-diphosphocytidyl-2C-methyl-D-erythritol. The sequence is that of 4-diphosphocytidyl-2-C-methyl-D-erythritol kinase from Francisella tularensis subsp. tularensis (strain FSC 198).